The sequence spans 1614 residues: Low-density lipoprotein receptor-related protein 5 (1614 aa).

The signal sequence occupies residues 1–30 (METAPTRAPPPPPPPLLLLVLYCSLVPAAA). The segment at 31-287 (SPLLLFANRR…YSPMDIQVLS (257 aa)) is beta-propeller 1. Topologically, residues 31-1383 (SPLLLFANRR…PPSDDIPAHS (1353 aa)) are extracellular. 5 LDL-receptor class B repeats span residues 74–118 (GAVY…DWVG), 119–161 (KKLY…DPAH), 162–205 (GYMY…DLEE), 206–246 (QKLY…TLSG), and 247–289 (DTLY…LSQE). N-linked (GlcNAc...) asparagine glycosylation is found at Asn-92 and Asn-137. One can recognise an EGF-like 1 domain in the interval 294–336 (FHTPCEEDNGGCSHLCLLSPREPFYSCACPTGVQLQDNGKTCK). 3 cysteine pairs are disulfide-bonded: Cys-298–Cys-309, Cys-305–Cys-320, and Cys-322–Cys-335. The tract at residues 340-601 (EEVLLLARRT…AVNVAKVVGT (262 aa)) is beta-propeller 2. LDL-receptor class B repeat units lie at residues 384 to 426 (GYVY…DWVA), 427 to 469 (RNLY…HPVM), 470 to 513 (GLMY…DLQE), 514 to 556 (GKLY…LGDF), and 557 to 599 (IYWT…AKVV). Asn-445 and Asn-498 each carry an N-linked (GlcNAc...) asparagine glycan. The EGF-like 2 domain maps to 600–640 (GTNPCADGNGGCSHLCFFTPRATKCGCPIGLELLSDMKTCI). Cystine bridges form between Cys-604–Cys-615, Cys-611–Cys-624, and Cys-626–Cys-639. Positions 643–902 (EAFLVFTSRA…VFHSSRQDGL (260 aa)) are beta-propeller 3. 5 LDL-receptor class B repeats span residues 686-728 (NHIY…DWMG), 729-771 (KNLY…DPTK), 772-814 (GYIY…DYAD), 815-854 (QRLY…TQYS), and 855-897 (DYIY…FHSS). N-linked (GlcNAc...) asparagine glycosylation occurs at Asn-704. Residue Asn-877 is glycosylated (N-linked (GlcNAc...) asparagine). The EGF-like 3 domain maps to 901–941 (GLNDCVHSNGQCGQLCLAIPGGHRCGCASHYTLDPSSRNCS). 3 disulfides stabilise this stretch: Cys-905–Cys-916, Cys-912–Cys-925, and Cys-927–Cys-940. The interval 944–1211 (STFLLFSQKF…AVEEVSLEEF (268 aa)) is beta-propeller 4. LDL-receptor class B repeat units follow at residues 988–1034 (KFIY…DIYS), 1035–1077 (RTLF…NAER), 1078–1122 (GYMY…DNAL), 1123–1164 (GKLF…VLGR), and 1165–1206 (HLYW…VEEV). Positions 1002 to 1025 (AKDDGTQPSMLTSPSQSLSPDRQP) are disordered. Polar residues predominate over residues 1007 to 1021 (TQPSMLTSPSQSLSP). The EGF-like 4 domain occupies 1212 to 1253 (SAHPCARDNGGCSHICIAKGDGTPRCSCPVHLVLLQNLLTCG). Intrachain disulfides connect Cys-1216/Cys-1227, Cys-1223/Cys-1237, Cys-1239/Cys-1252, Cys-1258/Cys-1272, Cys-1265/Cys-1285, Cys-1279/Cys-1294, Cys-1297/Cys-1309, Cys-1304/Cys-1322, Cys-1316/Cys-1331, Cys-1335/Cys-1347, Cys-1342/Cys-1360, and Cys-1354/Cys-1369. LDL-receptor class A domains are found at residues 1257 to 1295 (TCSP…EGCP), 1296 to 1332 (VCSA…ANCD), and 1334 to 1370 (VCLP…LMCE). Residues 1384–1406 (SAIGPVIGIILSLFVMGGVYFVC) traverse the membrane as a helical segment. The Cytoplasmic portion of the chain corresponds to 1407 to 1614 (QRVMCQRYTG…PPPSPCTDSS (208 aa)). Residues 1474–1498 (RNHVTGASSSSSSSTKATLYPPILN) are disordered. Residues 1499-1505 (PPPSPAT) carry the PPPSP motif A motif. The short motif at 1537–1544 (PPTTPCST) is the PPPSP motif B element. Positions 1567–1599 (SDSDPYPPPPTPHSQYLSAEDSCPPSPGTERSY) are disordered. A PPPSP motif C motif is present at residues 1573 to 1580 (PPPPTPHS). A PPPSP motif D motif is present at residues 1590–1595 (PPSPGT). The PPPSP motif E motif lies at 1604–1611 (PPPPSPCT).

It belongs to the LDLR family. As to quaternary structure, homodimer; disulfide-linked. Forms phosphorylated oligomer aggregates on Wnt-signaling. Component of a WNT-signaling complex that contains a WNT protein, a FZD protein and LRP5 or LRP6. Interacts with FZD8; the interaction is formed on WNT-binding and signaling. Interacts (via the phosphorylated PPPSP motif domains) with AXIN1; the interaction prevents inhibition of beta-catenin phosphorylation and signaling and is enhanced in the presence of GSK3B and WNT1 or WNT3A. Interacts (via beta-propeller regions 3 and 4) with DKK1; the interaction, enhanced by MESD and/or KREMEN, inhibits beta-catenin signaling by preventing GSK3-mediated phosphorylation of the PPPSP motifs and subsequent, AXIN1 binding. Interacts with CSNK1E. Interacts with SOST; the interaction antagonizes canonical Wnt signaling. Interacts with APCDD1. Interacts with MESD; the interaction prevents the formation of LRP5 aggregates, targets LRP5 to the plasma membrane and, when complexed with KREMEN2, increases DKK1 binding. Interacts with CAPRIN2. Post-translationally, phosphorylation of cytoplasmic PPPSP motifs regulates the signal transduction of the Wnt signaling pathway through acting as a docking site for AXIN1. Widely expressed, with the highest expression levels in liver, heart, and lung and the lowest levels in brain and spleen.

It is found in the membrane. It localises to the endoplasmic reticulum. Its function is as follows. Acts as a coreceptor with members of the frizzled family of seven-transmembrane spanning receptors to transduce signal by Wnt proteins. Activates the canonical Wnt signaling pathway that controls cell fate determination and self-renewal during embryonic development and adult tissue regeneration. In particular, may play an important role in the development of the posterior patterning of the epiblast during gastrulation. During bone development, regulates osteoblast proliferation and differentiation thus determining bone mass. Mechanistically, the formation of the signaling complex between Wnt ligand, frizzled receptor and LRP5 coreceptor promotes the recruitment of AXIN1 to LRP5, stabilizing beta-catenin/CTNNB1 and activating TCF/LEF-mediated transcriptional programs. Acts as a coreceptor for non-Wnt proteins, such as norrin/NDP. Binding of norrin/NDP to frizzled 4/FZD4-LRP5 receptor complex triggers beta-catenin/CTNNB1-dependent signaling known to be required for retinal vascular development. Plays a role in controlling postnatal vascular regression in retina via macrophage-induced endothelial cell apoptosis. The polypeptide is Low-density lipoprotein receptor-related protein 5 (Mus musculus (Mouse)).